A 570-amino-acid polypeptide reads, in one-letter code: Frizzled-2 (570 aa).

The first 28 residues, 1–28 (MRARSALPRSALPRLLLPLLLLPAAGPA), serve as a signal peptide directing secretion. The Extracellular portion of the chain corresponds to 29–252 (QFHGEKGISI…HHHTRFARLW (224 aa)). Residues 39 to 158 (PDHGFCQPIS…HGAEQICVGQ (120 aa)) form the FZ domain. Cystine bridges form between Cys-44-Cys-105, Cys-52-Cys-98, Cys-89-Cys-126, Cys-115-Cys-155, and Cys-119-Cys-143. A glycan (N-linked (GlcNAc...) asparagine) is linked at Asn-58. N-linked (GlcNAc...) asparagine glycosylation occurs at Asn-159. The segment at 166-194 (PALLTTAPPSGLQPGAGGTPGGPGGGGAP) is disordered. Residues 179 to 193 (PGAGGTPGGPGGGGA) show a composition bias toward gly residues. The helical transmembrane segment at 253 to 273 (ILTWSVLCCASTFFTVTTSLV) threads the bilayer. The Cytoplasmic portion of the chain corresponds to 274–284 (AMQRFRYPERP). Residues 285–305 (IIFLSGCYTMVSVAYIAGFVL) form a helical membrane-spanning segment. The Extracellular segment spans residues 306-332 (QERVVCNERFSEDGYRTVGQGTKKEGC). Residues 333 to 353 (TILFMMLYFFSMASSIWWVIL) traverse the membrane as a helical segment. At 354-375 (SLTWFLAAGMKWGHAAIEANSQ) the chain is on the cytoplasmic side. Residues 376–396 (YFHLAAWAVPAVKTITILAMG) traverse the membrane as a helical segment. Topologically, residues 397 to 419 (QIDGDLLSGVCFVGLNRLDPLRG) are extracellular. The chain crosses the membrane as a helical span at residues 420-440 (FVLAPLFVYLFIGTSFLLAGF). Over 441-466 (VSLFRIRTIMKHDGTKTEPLERLMVR) the chain is Cytoplasmic. A helical membrane pass occupies residues 467–487 (IGVFSVLYTVPATIVIACYFY). The Extracellular portion of the chain corresponds to 488 to 524 (EQAFREHWERSWVSQHCKSLAIPCPAHYTPRTSPDFT). Residues 525–545 (VYMIKYLMTLIVGITSGFWIW) traverse the membrane as a helical segment. Residues 546–570 (SGKTLHSWRKFYTRLTNSRHGETTV) are Cytoplasmic-facing. The Lys-Thr-X-X-X-Trp motif, mediates interaction with the PDZ domain of Dvl family members signature appears at 548–553 (KTLHSW). The PDZ-binding motif lies at 568 to 570 (TTV).

It belongs to the G-protein coupled receptor Fz/Smo family. Post-translationally, ubiquitinated by ZNRF3, leading to its degradation by the proteasome. In terms of tissue distribution, widely expressed. Most abundant in kidney, liver, uterus, ovary and heart. Lower levels seen in brain and intestine. Extremely low in calvaria, mammary glands and testis.

It is found in the membrane. The protein localises to the cell membrane. Its function is as follows. Receptor for Wnt proteins. Most of frizzled receptors are coupled to the beta-catenin canonical signaling pathway, which leads to the activation of disheveled proteins, inhibition of GSK-3 kinase, nuclear accumulation of beta-catenin and activation of Wnt target genes. A second signaling pathway involving PKC and calcium fluxes has been seen for some family members, but it is not yet clear if it represents a distinct pathway or if it can be integrated in the canonical pathway, as PKC seems to be required for Wnt-mediated inactivation of GSK-3 kinase. Both pathways seem to involve interactions with G-proteins. May be involved in transduction and intercellular transmission of polarity information during tissue morphogenesis and/or in differentiated tissues. Activation by Wnt5A stimulates PKC activity via a G-protein-dependent mechanism. The polypeptide is Frizzled-2 (Fzd2) (Rattus norvegicus (Rat)).